A 371-amino-acid polypeptide reads, in one-letter code: Aminomethyltransferase (371 aa).

This sequence belongs to the GcvT family. As to quaternary structure, the glycine cleavage system is composed of four proteins: P, T, L and H.

The enzyme catalyses N(6)-[(R)-S(8)-aminomethyldihydrolipoyl]-L-lysyl-[protein] + (6S)-5,6,7,8-tetrahydrofolate = N(6)-[(R)-dihydrolipoyl]-L-lysyl-[protein] + (6R)-5,10-methylene-5,6,7,8-tetrahydrofolate + NH4(+). Its function is as follows. The glycine cleavage system catalyzes the degradation of glycine. This is Aminomethyltransferase from Pectobacterium atrosepticum (strain SCRI 1043 / ATCC BAA-672) (Erwinia carotovora subsp. atroseptica).